The primary structure comprises 1172 residues: Pesticidal crystal protein Cry1Ha (1172 aa).

Belongs to the delta endotoxin family.

Promotes colloidosmotic lysis by binding to the midgut epithelial cells of insects. The sequence is that of Pesticidal crystal protein Cry1Ha (cry1Ha) from Bacillus thuringiensis.